Reading from the N-terminus, the 63-residue chain is Cecropin-2 (63 aa).

Positions 1–21 (MNFNKVLVLLAVIFAVFAGQT) are cleaved as a signal peptide. The propeptide occupies 22-23 (EA). A Lysine amide modification is found at Lys-62.

Belongs to the cecropin family.

The protein resides in the secreted. Functionally, cecropins have lytic and antibacterial activity against several Gram-positive and Gram-negative bacteria. The protein is Cecropin-2 (CEC2) of Ceratitis capitata (Mediterranean fruit fly).